The chain runs to 168 residues: UPF0134 protein MPN_524 (168 aa).

It belongs to the UPF0134 family.

The polypeptide is UPF0134 protein MPN_524 (Mycoplasma pneumoniae (strain ATCC 29342 / M129 / Subtype 1) (Mycoplasmoides pneumoniae)).